A 79-amino-acid chain; its full sequence is RNA-binding protein Hfq (79 aa).

The region spanning 10–70 (DAFLNHVRKT…ISTIMPAQPI (61 aa)) is the Sm domain.

It belongs to the Hfq family. In terms of assembly, homohexamer.

RNA chaperone that binds small regulatory RNA (sRNAs) and mRNAs to facilitate mRNA translational regulation in response to envelope stress, environmental stress and changes in metabolite concentrations. Also binds with high specificity to tRNAs. The sequence is that of RNA-binding protein Hfq from Ruegeria pomeroyi (strain ATCC 700808 / DSM 15171 / DSS-3) (Silicibacter pomeroyi).